A 160-amino-acid chain; its full sequence is Ribonuclease ARB_07070 (160 aa).

The signal sequence occupies residues 1 to 18; it reads MVSFKAILTLSLIGAAFA. The interval 26-51 is disordered; the sequence is AEPVEDSGAVANSPEGSGMDLGGTDP. E103 serves as the catalytic Proton acceptor. H144 (proton donor) is an active-site residue.

The protein belongs to the ribonuclease U2 family.

It is found in the secreted. In terms of biological role, this purine-specific ribonuclease cleaves 28S RNA in eukaryotic ribosomes, inhibits protein synthesis, and shows antitumor activity. The protein is Ribonuclease ARB_07070 of Arthroderma benhamiae (strain ATCC MYA-4681 / CBS 112371) (Trichophyton mentagrophytes).